The following is a 30-amino-acid chain: Trypsin inhibitor 1 (30 aa).

3 disulfide bridges follow: Cys4–Cys21, Cys11–Cys23, and Cys17–Cys29.

Belongs to the protease inhibitor I7 (squash-type serine protease inhibitor) family.

Its subcellular location is the secreted. In terms of biological role, inhibits trypsin. This Citrullus lanatus (Watermelon) protein is Trypsin inhibitor 1.